Consider the following 614-residue polypeptide: Bifunctional 3'-phosphoadenosine 5'-phosphosulfate synthase 2 (614 aa).

Residues 1-215 (MSGIKKQKTE…VVELLQEQNI (215 aa)) are adenylyl-sulfate kinase. 52-57 (GAGKTT) is a binding site for ATP. Residues 79–82 (DNVR), Phe-91, 96–99 (REEN), 122–123 (IS), Lys-161, and 174–175 (GF) each bind adenosine 5'-phosphosulfate. ATP is bound by residues Ser-197, 409–412 (QLRN), 511–515 (GRDPA), and Ala-553. The tract at residues 224-614 (IHELFVPENK…TDYYRSLEKN (391 aa)) is sulfate adenylyltransferase.

It in the N-terminal section; belongs to the APS kinase family. In the C-terminal section; belongs to the sulfate adenylyltransferase family. Expressed in cartilage and adrenal gland.

It catalyses the reaction sulfate + ATP + H(+) = adenosine 5'-phosphosulfate + diphosphate. The enzyme catalyses adenosine 5'-phosphosulfate + ATP = 3'-phosphoadenylyl sulfate + ADP + H(+). Its pathway is sulfur metabolism; sulfate assimilation. Functionally, bifunctional enzyme with both ATP sulfurylase and APS kinase activity, which mediates two steps in the sulfate activation pathway. The first step is the transfer of a sulfate group to ATP to yield adenosine 5'-phosphosulfate (APS), and the second step is the transfer of a phosphate group from ATP to APS yielding 3'-phosphoadenylylsulfate/PAPS, the activated sulfate donor used by sulfotransferases. In mammals, PAPS is the sole source of sulfate while APS appears to only be an intermediate in the sulfate-activation pathway. Plays indirectly an important role in skeletogenesis during postnatal growth. The sequence is that of Bifunctional 3'-phosphoadenosine 5'-phosphosulfate synthase 2 (PAPSS2) from Homo sapiens (Human).